We begin with the raw amino-acid sequence, 62 residues long: MALYITEECTYCGACEPECPTNAISAGSEIYVIDAASCNECAGFADSPACVAVCPAECIVQG.

2 consecutive 4Fe-4S ferredoxin-type domains span residues alanine 2–serine 28 and glutamate 29–glycine 62. 8 residues coordinate [4Fe-4S] cluster: cysteine 9, cysteine 12, cysteine 15, cysteine 19, cysteine 38, cysteine 41, cysteine 50, and cysteine 54.

The cofactor is [4Fe-4S] cluster.

Ferredoxins are iron-sulfur proteins that transfer electrons in a wide variety of metabolic reactions. The protein is Ferredoxin-1 of Chlorobaculum tepidum (strain ATCC 49652 / DSM 12025 / NBRC 103806 / TLS) (Chlorobium tepidum).